Consider the following 423-residue polypeptide: Adenylosuccinate synthetase (423 aa).

Residues 11–17 (GDEGKGK) and 39–41 (GHT) each bind GTP. Asp12 acts as the Proton acceptor in catalysis. 2 residues coordinate Mg(2+): Asp12 and Gly39. IMP-binding positions include 12–15 (DEGK), 37–40 (NAGH), Thr127, Arg141, Gln223, Thr238, and Arg302. The Proton donor role is filled by His40. Substrate is bound at residue 298–304 (TTTGRSR). Residues Arg304, 330–332 (KLD), and 412–414 (SVG) contribute to the GTP site.

The protein belongs to the adenylosuccinate synthetase family. As to quaternary structure, homodimer. Mg(2+) serves as cofactor.

The protein resides in the cytoplasm. It carries out the reaction IMP + L-aspartate + GTP = N(6)-(1,2-dicarboxyethyl)-AMP + GDP + phosphate + 2 H(+). Its pathway is purine metabolism; AMP biosynthesis via de novo pathway; AMP from IMP: step 1/2. Plays an important role in the de novo pathway of purine nucleotide biosynthesis. Catalyzes the first committed step in the biosynthesis of AMP from IMP. The protein is Adenylosuccinate synthetase of Methanococcoides burtonii (strain DSM 6242 / NBRC 107633 / OCM 468 / ACE-M).